Consider the following 317-residue polypeptide: 4-hydroxy-3-methylbut-2-enyl diphosphate reductase (317 aa).

C12 is a [4Fe-4S] cluster binding site. Residues H41 and H74 each coordinate (2E)-4-hydroxy-3-methylbut-2-enyl diphosphate. The dimethylallyl diphosphate site is built by H41 and H74. Isopentenyl diphosphate is bound by residues H41 and H74. C97 is a binding site for [4Fe-4S] cluster. H125 lines the (2E)-4-hydroxy-3-methylbut-2-enyl diphosphate pocket. H125 is a dimethylallyl diphosphate binding site. H125 contributes to the isopentenyl diphosphate binding site. The active-site Proton donor is the E127. Position 168 (T168) interacts with (2E)-4-hydroxy-3-methylbut-2-enyl diphosphate. C198 contributes to the [4Fe-4S] cluster binding site. The (2E)-4-hydroxy-3-methylbut-2-enyl diphosphate site is built by S226, S227, N228, and S270. S226, S227, N228, and S270 together coordinate dimethylallyl diphosphate. Positions 226, 227, 228, and 270 each coordinate isopentenyl diphosphate.

The protein belongs to the IspH family. As to quaternary structure, homodimer. Requires [4Fe-4S] cluster as cofactor.

It carries out the reaction isopentenyl diphosphate + 2 oxidized [2Fe-2S]-[ferredoxin] + H2O = (2E)-4-hydroxy-3-methylbut-2-enyl diphosphate + 2 reduced [2Fe-2S]-[ferredoxin] + 2 H(+). It catalyses the reaction dimethylallyl diphosphate + 2 oxidized [2Fe-2S]-[ferredoxin] + H2O = (2E)-4-hydroxy-3-methylbut-2-enyl diphosphate + 2 reduced [2Fe-2S]-[ferredoxin] + 2 H(+). It functions in the pathway isoprenoid biosynthesis; dimethylallyl diphosphate biosynthesis; dimethylallyl diphosphate from (2E)-4-hydroxy-3-methylbutenyl diphosphate: step 1/1. Its pathway is isoprenoid biosynthesis; isopentenyl diphosphate biosynthesis via DXP pathway; isopentenyl diphosphate from 1-deoxy-D-xylulose 5-phosphate: step 6/6. In terms of biological role, catalyzes the conversion of 1-hydroxy-2-methyl-2-(E)-butenyl 4-diphosphate (HMBPP) into a mixture of isopentenyl diphosphate (IPP) and dimethylallyl diphosphate (DMAPP). Acts in the terminal step of the DOXP/MEP pathway for isoprenoid precursor biosynthesis. This Yersinia pseudotuberculosis serotype IB (strain PB1/+) protein is 4-hydroxy-3-methylbut-2-enyl diphosphate reductase.